The following is a 65-amino-acid chain: Large ribosomal subunit protein bL35 (65 aa).

The protein belongs to the bacterial ribosomal protein bL35 family.

The sequence is that of Large ribosomal subunit protein bL35 from Desulfitobacterium hafniense (strain DSM 10664 / DCB-2).